The following is a 345-amino-acid chain: Cell division control protein 2 homolog 2 (345 aa).

Residues 1-44 (MQVQVQEGQTACDGSLRPLPSAGPASFVPRSLRPAPLRGTSTPD) form a disordered region. One can recognise a Protein kinase domain in the interval 46 to 328 (YSRIEKVGEG…AYEALQHSYF (283 aa)). ATP contacts are provided by residues 52 to 60 (VGEGSYGIV) and K75. The residue at position 56 (S56) is a Phosphoserine. Y57 carries the phosphotyrosine modification. The active-site Proton acceptor is D168.

This sequence belongs to the protein kinase superfamily. CMGC Ser/Thr protein kinase family. CDC2/CDKX subfamily. In terms of assembly, forms a stable but non-covalent complex with a regulatory subunit and with a cyclin.

The catalysed reaction is L-seryl-[protein] + ATP = O-phospho-L-seryl-[protein] + ADP + H(+). It carries out the reaction L-threonyl-[protein] + ATP = O-phospho-L-threonyl-[protein] + ADP + H(+). Phosphorylation at Ser-56 or Tyr-57 inactivates the enzyme. Its function is as follows. Probably involved in the control of the cell cycle. The chain is Cell division control protein 2 homolog 2 (CRK2) from Trypanosoma brucei brucei.